A 459-amino-acid polypeptide reads, in one-letter code: UDP-N-acetylmuramate--L-alanine ligase (459 aa).

118–124 (GTHGKTT) is an ATP binding site.

It belongs to the MurCDEF family.

The protein resides in the cytoplasm. The catalysed reaction is UDP-N-acetyl-alpha-D-muramate + L-alanine + ATP = UDP-N-acetyl-alpha-D-muramoyl-L-alanine + ADP + phosphate + H(+). It participates in cell wall biogenesis; peptidoglycan biosynthesis. Its function is as follows. Cell wall formation. This Lachnospira eligens (strain ATCC 27750 / DSM 3376 / VPI C15-48 / C15-B4) (Eubacterium eligens) protein is UDP-N-acetylmuramate--L-alanine ligase.